Reading from the N-terminus, the 188-residue chain is Gamma-glutamylcyclotransferase (188 aa).

Residue 19–22 (YFAY) coordinates substrate. The active-site Proton acceptor is E98. S173 is modified (phosphoserine).

It belongs to the gamma-glutamylcyclotransferase family. Homodimer.

The enzyme catalyses an alpha-(gamma-L-glutamyl)-L-amino acid = 5-oxo-L-proline + an L-alpha-amino acid. Catalyzes the formation of 5-oxoproline from gamma-glutamyl dipeptides and may play a significant role in glutathione homeostasis. Induces release of cytochrome c from mitochondria with resultant induction of apoptosis. In Mus musculus (Mouse), this protein is Gamma-glutamylcyclotransferase (Ggct).